The primary structure comprises 480 residues: Alpha-glucosidase (480 aa).

4-70 (VKIGIIGAGS…ADLKFEKTTS (67 aa)) contributes to the NAD(+) binding site. The substrate site is built by Asp-119 and Asn-153. Cys-174 serves as a coordination point for Mn(2+). His-175 serves as the catalytic Proton donor. His-203 is a Mn(2+) binding site. Asp-260 (proton acceptor) is an active-site residue.

This sequence belongs to the glycosyl hydrolase 4 family. As to quaternary structure, homodimer. The cofactor is NAD(+). It depends on Mn(2+) as a cofactor.

It carries out the reaction Hydrolysis of terminal, non-reducing (1-&gt;4)-linked alpha-D-glucose residues with release of alpha-D-glucose.. Inhibited by EDTA in vitro. Functionally, is able to hydrolyze diverse types of alpha-glycoside bonds in di- and trisaccharides: alpha-1,4 bonds of maltose and maltotriose, alpha-1,1 bonds of trehalose, alpha-1,2 bonds of sucrose, alpha-1,3 bonds of turanose and melizitose, alpha-1,6 bonds of isomaltose and melibiose. AglA is not specific with respect to the configuration at the C-4 position of its substrates because it also possesses alpha-galactosidase activity. Acts on the substrate from the non-reducing end of the chain. The activity of AglA drops with increasing length of the saccharide chain. Does not hydrolyze alpha-, beta-, and gamma-cyclodextrins or polysaccharides (starch, pullulan, amylose, amylopectin, glycogen). Does not cleave beta-glycosidic bonds in di-, oligo-, or polysaccharides. In Thermotoga neapolitana, this protein is Alpha-glucosidase (aglA).